Consider the following 510-residue polypeptide: MQLHLSEPPLTQGECALVYCFAASGGNGRFPLPPEIASWDEKAWSGLVAETVQEQGFQGKPNSSVALRLTGEIRKLVLVGLGDPAALTLEALRRATANGLRQAHSLKAKQVMLSLPETGLDRVRGVQAVAEACLLVAHRDNRFKSSAKGEEENSFSVQEVTLLVPGLAQARPDYEVALQRAIEMAAGTILARELVAAPANIVTPLALADTARQLAQEYGLEVEILGQEECEALGMGAFLGVAKASDLPPQFIHLTYKPAQGDPVTKLALVGKGLTFDSGGLNIKTDSRSIAMMKTDMGGAAAVLGAARALAALKPQVELHFIVAATENMISGHAIHPGDILTASNQKTIEVNNTDAEGRLTLADALVFAEKLGVDAILDLATLTGACVIALGEEIAGLFTPDETLAQELQQAANLSGEKIWRLPLEEGYFEGLSSIVADMKNTGPRSGGSITAALFLKQFVEKTPWAHLDIAGPVWTEKDAGYNNKGATGYGVRTLVEWVLARQAAAACS.

Lys-272 and Asp-277 together coordinate Mn(2+). Lys-284 is a catalytic residue. Mn(2+)-binding residues include Asp-296, Asp-355, and Glu-357. The active site involves Arg-359.

It belongs to the peptidase M17 family. Requires Mn(2+) as cofactor.

The protein resides in the cytoplasm. It carries out the reaction Release of an N-terminal amino acid, Xaa-|-Yaa-, in which Xaa is preferably Leu, but may be other amino acids including Pro although not Arg or Lys, and Yaa may be Pro. Amino acid amides and methyl esters are also readily hydrolyzed, but rates on arylamides are exceedingly low.. The catalysed reaction is Release of an N-terminal amino acid, preferentially leucine, but not glutamic or aspartic acids.. In terms of biological role, presumably involved in the processing and regular turnover of intracellular proteins. Catalyzes the removal of unsubstituted N-terminal amino acids from various peptides. The sequence is that of Probable cytosol aminopeptidase from Synechococcus sp. (strain JA-2-3B'a(2-13)) (Cyanobacteria bacterium Yellowstone B-Prime).